The chain runs to 351 residues: Heme A synthase (351 aa).

8 helical membrane passes run 17–37 (WLIL…ATRL), 103–123 (LIGL…WLGQ), 129–149 (LVGL…MVSS), 164–184 (LMTH…LWLD), 201–221 (AMAL…VAGL), 261–281 (FNHR…AWAF), 289–309 (EFAF…LTLV), and 316–336 (LALV…YTVW). H263 is a binding site for heme. A heme-binding site is contributed by H320.

Belongs to the COX15/CtaA family. Type 2 subfamily. In terms of assembly, interacts with CtaB. Requires heme b as cofactor.

It is found in the cell membrane. It carries out the reaction Fe(II)-heme o + 2 A + H2O = Fe(II)-heme a + 2 AH2. It functions in the pathway porphyrin-containing compound metabolism; heme A biosynthesis; heme A from heme O: step 1/1. Functionally, catalyzes the conversion of heme O to heme A by two successive hydroxylations of the methyl group at C8. The first hydroxylation forms heme I, the second hydroxylation results in an unstable dihydroxymethyl group, which spontaneously dehydrates, resulting in the formyl group of heme A. The polypeptide is Heme A synthase (Hyphomonas neptunium (strain ATCC 15444)).